A 193-amino-acid chain; its full sequence is Pyridoxal 5'-phosphate synthase subunit PdxT (193 aa).

50–52 is an L-glutamine binding site; that stretch reads GES. The active-site Nucleophile is the C82. Residues R109 and 136–137 each bind L-glutamine; that span reads IR. Residues H172 and E174 each act as charge relay system in the active site.

It belongs to the glutaminase PdxT/SNO family. In terms of assembly, in the presence of PdxS, forms a dodecamer of heterodimers. Only shows activity in the heterodimer.

The catalysed reaction is aldehydo-D-ribose 5-phosphate + D-glyceraldehyde 3-phosphate + L-glutamine = pyridoxal 5'-phosphate + L-glutamate + phosphate + 3 H2O + H(+). It catalyses the reaction L-glutamine + H2O = L-glutamate + NH4(+). It participates in cofactor biosynthesis; pyridoxal 5'-phosphate biosynthesis. Catalyzes the hydrolysis of glutamine to glutamate and ammonia as part of the biosynthesis of pyridoxal 5'-phosphate. The resulting ammonia molecule is channeled to the active site of PdxS. The sequence is that of Pyridoxal 5'-phosphate synthase subunit PdxT from Streptococcus pneumoniae serotype 19F (strain G54).